The chain runs to 1121 residues: MSAHPDDLFWQQILNMDPTELLSDDVISSTCDENTAAGTDIMQPLCVDMSVQPTTSGCHTGAMMSDSYFSNDTPDQNCQSHSTLTDLSPEDMNNQINVQPNQMTFQPISPPIQDQNYGYSNNMINPIKPASIIKLHGHSIGEMTVTDPSSHVNAQHFVQQSNPKFFLNMYPCMTANSQGPGECQSVHNQSSGSGSNSYDINTAPRDEWIFTTSGGESWVLKRNTPNPPNSRTNLIFNNAQPIFHTQPQVSGFSDCSYQGGGLNSREYVNLAGYTPVCNMQNIKNSWATQLGASIDCMTASPTGIDANVNSAFQPVGVVSNNRGANVSMGGMGNYIENNSPWNQYYKSEMANNSINVKESNVYGHVGCVNDAISDKQGGTANVPSSLLNPDHQDWMRMTGTNTHMLNNINTNTEMENYDFPENDGNVHGATGVDLSTLSNGQQHSAFEGNGTFPVVNTGNPRTTLNCAPQLFLLGGNPTIAHPMNGNNETPDKNVCKPTPSTGVIKKLNFDGVDRGGGIGNFPKLASFVAMREKMSNTVNPSCGTFLEQLEGLRQQNSFEKNISFADLHFSEEDDVLSSASSVSCNSNCDMKIEVSQQGITVSNLQQGFRQQMNMNSSVVKMDGSYKTQEMSNGCATDVTDNAGTIQQNKRIHSQNENPEDGQVREGGCSDVRNEPPRKSARIHNMKSEGVTCGMCMTAADSTRQDASGGSSSGTKNEYYDDESELTGLSDTDSDNEVQCCQEVTKVGPKTYSSENFNPEYRQAKRLLADIPYRRWIPDPVNMEDNDGPFIPIVTRPATVCMNGRRRRTFFRQCVTAFGPLSKLTYFKELLQSYVSKNNNSYLSISWPPKHGVYVMSEKKLGYEHIPTLKDKFPLPCGWMMVLGVVGAEPPAALNKNMVILLCENRWVLLHNYSNSTHELFLAASDLKQFMEEGLSRCDPIYEESTVPYGVAMENSLRDFLRNSRTFQDLMDQRDNMHGCNWTFNGMPGRLGDRVIHLCNPESVDSIPGDEAVVCEGRPLYFFAYVTTFKSNPATKATVLIAADKDLRIYGYHKGRPRIRYLCKNVKTFFKAGARKFYLDFQITPKRLLAVNEEEYLNTLQNAPCLLLKPSVFRNIYSQEGK.

The interval 179–198 (GPGECQSVHNQSSGSGSNSY) is disordered. Residues Asn188, Asn325, Asn351, Asn449, Asn561, and Asn615 are each glycosylated (N-linked (GlcNAc...) asparagine; by host). Disordered regions lie at residues 649-684 (KRIHSQNENPEDGQVREGGCSDVRNEPPRKSARIHN) and 701-734 (STRQDASGGSSSGTKNEYYDDESELTGLSDTDSD). Residues 701 to 715 (STRQDASGGSSSGTK) are compositionally biased toward polar residues. Residues Asn838, Asn911, Asn914, and Asn980 are each glycosylated (N-linked (GlcNAc...) asparagine; by host).

The protein belongs to the herpesviridae US22 family.

This is an uncharacterized protein from Homo sapiens (Human).